Consider the following 198-residue polypeptide: Cell division protein SepF (198 aa).

The interval 170–198 (EVPQPPARPARPASTNPPAWGNETNRMAQ) is disordered. The span at 179–188 (ARPASTNPPA) shows a compositional bias: low complexity.

This sequence belongs to the SepF family. As to quaternary structure, homodimer. Interacts with FtsZ.

It localises to the cytoplasm. Functionally, cell division protein that is part of the divisome complex and is recruited early to the Z-ring. Probably stimulates Z-ring formation, perhaps through the cross-linking of FtsZ protofilaments. Its function overlaps with FtsA. This chain is Cell division protein SepF, found in Nostoc sp. (strain PCC 7120 / SAG 25.82 / UTEX 2576).